A 341-amino-acid polypeptide reads, in one-letter code: Phospholipid phosphatase homolog 1.2 homolog (341 aa).

Helical transmembrane passes span 30–50 (LFIF…LLGV), 71–91 (ITAV…VLFV), and 122–142 (LLTY…LNIV). A glycan (N-linked (GlcNAc...) asparagine) is linked at asparagine 162. The next 2 membrane-spanning stretches (helical) occupy residues 223 to 243 (RIVV…ISFS) and 257 to 277 (VGIF…TDLF). 2 disordered regions span residues 284–308 (SETQ…ERHR) and 322–341 (FEAT…PQSA). Over residues 299–308 (RNSEDEERHR) the composition is skewed to basic and acidic residues.

The protein belongs to the PA-phosphatase related phosphoesterase family.

The protein resides in the membrane. The protein is Phospholipid phosphatase homolog 1.2 homolog of Caenorhabditis elegans.